Reading from the N-terminus, the 473-residue chain is Photosystem II CP43 reaction center protein (473 aa).

The propeptide occupies 1 to 14 (MKTLYSPRRFYPVE). At threonine 15 the chain carries N-acetylthreonine. Threonine 15 bears the Phosphothreonine mark. 5 consecutive transmembrane segments (helical) span residues 69 to 93 (LFEVAHFIPEKPMYEQGLILLPHLA), 134 to 155 (LIGPETLEESFPFFGYAWKDRN), 178 to 200 (KALFFGGIYDTWAPGGGDVRKIT), 255 to 275 (KPFAWTRRAFVWSGEAYLSYS), and 291 to 312 (WFNNTAYPSEFYGPTGPEASQA). Glutamate 367 contacts [CaMn4O5] cluster. The helical transmembrane segment at 447–471 (RARAAAAGFEKGIDRDLEPVLFMTP) threads the bilayer.

It belongs to the PsbB/PsbC family. PsbC subfamily. As to quaternary structure, PSII is composed of 1 copy each of membrane proteins PsbA, PsbB, PsbC, PsbD, PsbE, PsbF, PsbH, PsbI, PsbJ, PsbK, PsbL, PsbM, PsbT, PsbX, PsbY, PsbZ, Psb30/Ycf12, at least 3 peripheral proteins of the oxygen-evolving complex and a large number of cofactors. It forms dimeric complexes. Binds multiple chlorophylls and provides some of the ligands for the Ca-4Mn-5O cluster of the oxygen-evolving complex. It may also provide a ligand for a Cl- that is required for oxygen evolution. PSII binds additional chlorophylls, carotenoids and specific lipids. is required as a cofactor.

The protein resides in the plastid. It localises to the chloroplast thylakoid membrane. One of the components of the core complex of photosystem II (PSII). It binds chlorophyll and helps catalyze the primary light-induced photochemical processes of PSII. PSII is a light-driven water:plastoquinone oxidoreductase, using light energy to abstract electrons from H(2)O, generating O(2) and a proton gradient subsequently used for ATP formation. The protein is Photosystem II CP43 reaction center protein of Welwitschia mirabilis (Tree tumbo).